A 268-amino-acid chain; its full sequence is Undecaprenyl-diphosphatase (268 aa).

A run of 8 helical transmembrane segments spans residues 4–24 (STTL…FIPV), 50–70 (IQLG…VSVI), 84–104 (VAVL…HGFI), 109–129 (FETP…LLFV), 144–164 (LPLN…VPGV), 185–205 (AEFS…FDLF), 214–234 (SALG…VLVV), and 247–267 (ALFG…LLAG).

This sequence belongs to the UppP family.

It localises to the cell inner membrane. The catalysed reaction is di-trans,octa-cis-undecaprenyl diphosphate + H2O = di-trans,octa-cis-undecaprenyl phosphate + phosphate + H(+). In terms of biological role, catalyzes the dephosphorylation of undecaprenyl diphosphate (UPP). Confers resistance to bacitracin. This is Undecaprenyl-diphosphatase from Cereibacter sphaeroides (strain ATCC 17029 / ATH 2.4.9) (Rhodobacter sphaeroides).